The chain runs to 422 residues: 2,3-bisphosphoglycerate-independent phosphoglycerate mutase (422 aa).

A disordered region spans residues 173–194; that stretch reads DADPKRVGKPVKDVKPTSDDPA. Residues 174–190 show a composition bias toward basic and acidic residues; it reads ADPKRVGKPVKDVKPTS.

The protein belongs to the BPG-independent phosphoglycerate mutase family. A-PGAM subfamily.

The catalysed reaction is (2R)-2-phosphoglycerate = (2R)-3-phosphoglycerate. It participates in carbohydrate degradation; glycolysis; pyruvate from D-glyceraldehyde 3-phosphate: step 3/5. Its function is as follows. Catalyzes the interconversion of 2-phosphoglycerate and 3-phosphoglycerate. The protein is 2,3-bisphosphoglycerate-independent phosphoglycerate mutase of Methanopyrus kandleri (strain AV19 / DSM 6324 / JCM 9639 / NBRC 100938).